A 252-amino-acid chain; its full sequence is Large ribosomal subunit protein uL30 (252 aa).

The protein belongs to the universal ribosomal protein uL30 family.

In terms of biological role, binds to G-rich structures in 28S rRNA and in mRNAs. Plays a regulatory role in the translation apparatus; inhibits cell-free translation of mRNAs. The sequence is that of Large ribosomal subunit protein uL30 (RpL7) from Drosophila melanogaster (Fruit fly).